Reading from the N-terminus, the 365-residue chain is Class I histocompatibility antigen, Gogo-A*0501 alpha chain (365 aa).

The signal sequence occupies residues 1 to 24 (MAVVAPRTLLLLLSGALALTQTWA). Residues 25-114 (GSHSMRYFST…ALRYYNQSED (90 aa)) are alpha-1. Residues 25 to 308 (GSHSMRYFST…EPSSQPTIPI (284 aa)) are Extracellular-facing. Asn110 carries an N-linked (GlcNAc...) asparagine glycan. Residues 115–206 (GSHTIQRMYG…ENGKETLQRT (92 aa)) form an alpha-2 region. Disulfide bonds link Cys125-Cys188 and Cys227-Cys283. Positions 207–298 (DAPKTHTTHQ…GLPKPLTLRW (92 aa)) are alpha-3. Positions 209-295 (PKTHTTHQAV…QHEGLPKPLT (87 aa)) constitute an Ig-like C1-type domain. Residues 299–308 (EPSSQPTIPI) form a connecting peptide region. A helical membrane pass occupies residues 309-332 (VGIIAGLVLFGAVIAGAVVAAVRW). Topologically, residues 333–365 (RRKSSDRKGGSYSQAASSDSAQGSDVSLTACKV) are cytoplasmic. The interval 338–365 (DRKGGSYSQAASSDSAQGSDVSLTACKV) is disordered. Positions 342 to 359 (GSYSQAASSDSAQGSDVS) are enriched in low complexity. A Phosphoserine modification is found at Ser343. Tyr344 is modified (phosphotyrosine). A phosphoserine mark is found at Ser345, Ser349, Ser352, Ser356, and Ser359.

This sequence belongs to the MHC class I family. In terms of assembly, heterodimer of an alpha chain and a beta chain (beta-2-microglobulin).

It localises to the membrane. Its function is as follows. Involved in the presentation of foreign antigens to the immune system. This chain is Class I histocompatibility antigen, Gogo-A*0501 alpha chain, found in Gorilla gorilla gorilla (Western lowland gorilla).